The sequence spans 123 residues: MEKLNQTNLLLRFTLEIAALISLGVYAWISFNGYFKYVLTLVLPIAVMIVWSVFAVPHDPSRSGQTVIAVNGVTRLVIELLIFAMAVAALYFSYLKPVSIVFLCLIILHYIISAERIKWLLNQ.

A run of 4 helical transmembrane segments spans residues 9–31, 38–56, 67–91, and 98–114; these read LLLRFTLEIAALISLGVYAWISF, VLTLVLPIAVMIVWSVFAV, VIAVNGVTRLVIELLIFAMAVAALY, and VSIVFLCLIILHYIISA.

It to E.coli YhgE.

The protein localises to the cell membrane. This is an uncharacterized protein from Bacillus subtilis (strain 168).